We begin with the raw amino-acid sequence, 395 residues long: 1-deoxy-D-xylulose 5-phosphate reductoisomerase (395 aa).

NADPH-binding residues include Thr-10, Gly-11, Ser-12, Ile-13, Lys-37, and Asn-123. Lys-124 lines the 1-deoxy-D-xylulose 5-phosphate pocket. Residue Glu-125 participates in NADPH binding. Asp-149 is a Mn(2+) binding site. Positions 150, 151, 185, and 208 each coordinate 1-deoxy-D-xylulose 5-phosphate. Glu-151 is a Mn(2+) binding site. NADPH is bound at residue Gly-214. 4 residues coordinate 1-deoxy-D-xylulose 5-phosphate: Ser-221, Asn-226, Lys-227, and Glu-230. Glu-230 lines the Mn(2+) pocket.

This sequence belongs to the DXR family. Mg(2+) serves as cofactor. The cofactor is Mn(2+).

It catalyses the reaction 2-C-methyl-D-erythritol 4-phosphate + NADP(+) = 1-deoxy-D-xylulose 5-phosphate + NADPH + H(+). Its pathway is isoprenoid biosynthesis; isopentenyl diphosphate biosynthesis via DXP pathway; isopentenyl diphosphate from 1-deoxy-D-xylulose 5-phosphate: step 1/6. Functionally, catalyzes the NADPH-dependent rearrangement and reduction of 1-deoxy-D-xylulose-5-phosphate (DXP) to 2-C-methyl-D-erythritol 4-phosphate (MEP). This Shewanella loihica (strain ATCC BAA-1088 / PV-4) protein is 1-deoxy-D-xylulose 5-phosphate reductoisomerase.